Here is a 244-residue protein sequence, read N- to C-terminus: Probable cytokinin riboside 5'-monophosphate phosphoribohydrolase LOGL2 (244 aa).

Substrate-binding positions include Glu-91, 109 to 110 (RK), and 126 to 132 (GYGTLEE).

Belongs to the LOG family.

It carries out the reaction N(6)-(dimethylallyl)adenosine 5'-phosphate + H2O = N(6)-dimethylallyladenine + D-ribose 5-phosphate. It catalyses the reaction 9-ribosyl-trans-zeatin 5'-phosphate + H2O = trans-zeatin + D-ribose 5-phosphate. Functionally, cytokinin-activating enzyme working in the direct activation pathway. Phosphoribohydrolase that converts inactive cytokinin nucleotides to the biologically active free-base forms. In Oryza sativa subsp. japonica (Rice), this protein is Probable cytokinin riboside 5'-monophosphate phosphoribohydrolase LOGL2 (LOGL2).